A 64-amino-acid polypeptide reads, in one-letter code: Small ribosomal subunit protein bS18c (64 aa).

The protein belongs to the bacterial ribosomal protein bS18 family. As to quaternary structure, part of the 30S ribosomal subunit.

It localises to the plastid. The protein localises to the chloroplast. The sequence is that of Small ribosomal subunit protein bS18c (rps18) from Bigelowiella natans (Pedinomonas minutissima).